Consider the following 207-residue polypeptide: Glycerol-3-phosphate acyltransferase 1 (207 aa).

The next 5 membrane-spanning stretches (helical) occupy residues 3–23 (YVIASLLGYIFGCIHGSQIVG), 53–73 (IVVALIDIFKATAAIFLLLIL), 85–105 (HIYIYLTALFVIIGHNYPITM), 127–147 (IALIGIGVLILFTIATDYLAV), and 154–174 (ISFLITTYYIFGLAPFFIVVG).

Belongs to the PlsY family. As to quaternary structure, probably interacts with PlsX.

It is found in the cell membrane. It catalyses the reaction an acyl phosphate + sn-glycerol 3-phosphate = a 1-acyl-sn-glycero-3-phosphate + phosphate. Its pathway is lipid metabolism; phospholipid metabolism. Catalyzes the transfer of an acyl group from acyl-phosphate (acyl-PO(4)) to glycerol-3-phosphate (G3P) to form lysophosphatidic acid (LPA). This enzyme utilizes acyl-phosphate as fatty acyl donor, but not acyl-CoA or acyl-ACP. The polypeptide is Glycerol-3-phosphate acyltransferase 1 (Oceanobacillus iheyensis (strain DSM 14371 / CIP 107618 / JCM 11309 / KCTC 3954 / HTE831)).